Reading from the N-terminus, the 757-residue chain is Glutathione biosynthesis bifunctional protein GshAB (757 aa).

Residues 1-337 (MKIQHIIHEN…LGKARLAEVA (337 aa)) are glutamate--cysteine ligase. In terms of domain architecture, ATP-grasp spans 494 to 753 (KKVLQKAGFN…LTQNVIKMLF (260 aa)). Residue 521-580 (ALFENRAVVIKPKSTNYGLGITIFQQGVQNREDFAKALEIAFREDKEVMVEDYLVGTEYR) participates in ATP binding. Positions 702, 723, and 725 each coordinate Mg(2+). Mn(2+) contacts are provided by aspartate 702, glutamate 723, and asparagine 725.

The protein in the N-terminal section; belongs to the glutamate--cysteine ligase type 1 family. Type 2 subfamily. In terms of assembly, monomer. Mg(2+) is required as a cofactor. The cofactor is Mn(2+).

The enzyme catalyses L-cysteine + L-glutamate + ATP = gamma-L-glutamyl-L-cysteine + ADP + phosphate + H(+). It catalyses the reaction gamma-L-glutamyl-L-cysteine + glycine + ATP = glutathione + ADP + phosphate + H(+). It participates in sulfur metabolism; glutathione biosynthesis; glutathione from L-cysteine and L-glutamate: step 1/2. It functions in the pathway sulfur metabolism; glutathione biosynthesis; glutathione from L-cysteine and L-glutamate: step 2/2. Synthesizes glutathione from L-glutamate and L-cysteine via gamma-L-glutamyl-L-cysteine. The protein is Glutathione biosynthesis bifunctional protein GshAB of Pasteurella multocida (strain Pm70).